The following is a 235-amino-acid chain: Purine nucleoside phosphorylase DeoD-type (235 aa).

H4 lines the a purine D-ribonucleoside pocket. Phosphate is bound by residues G20, R24, R43, and R87 to T90. Residues E179–E181 and S203–D204 contribute to the a purine D-ribonucleoside site. D204 serves as the catalytic Proton donor.

It belongs to the PNP/UDP phosphorylase family. In terms of assembly, homohexamer; trimer of homodimers.

The enzyme catalyses a purine D-ribonucleoside + phosphate = a purine nucleobase + alpha-D-ribose 1-phosphate. It catalyses the reaction a purine 2'-deoxy-D-ribonucleoside + phosphate = a purine nucleobase + 2-deoxy-alpha-D-ribose 1-phosphate. In terms of biological role, catalyzes the reversible phosphorolytic breakdown of the N-glycosidic bond in the beta-(deoxy)ribonucleoside molecules, with the formation of the corresponding free purine bases and pentose-1-phosphate. This is Purine nucleoside phosphorylase DeoD-type from Brevibacillus brevis (strain 47 / JCM 6285 / NBRC 100599).